The primary structure comprises 355 residues: Uroporphyrinogen decarboxylase (355 aa).

Residues 27–31 (RQAGR), aspartate 77, tyrosine 154, threonine 209, and histidine 327 each bind substrate.

Belongs to the uroporphyrinogen decarboxylase family. Homodimer.

It localises to the cytoplasm. The catalysed reaction is uroporphyrinogen III + 4 H(+) = coproporphyrinogen III + 4 CO2. It participates in porphyrin-containing compound metabolism; protoporphyrin-IX biosynthesis; coproporphyrinogen-III from 5-aminolevulinate: step 4/4. In terms of biological role, catalyzes the decarboxylation of four acetate groups of uroporphyrinogen-III to yield coproporphyrinogen-III. The sequence is that of Uroporphyrinogen decarboxylase from Tolumonas auensis (strain DSM 9187 / NBRC 110442 / TA 4).